Reading from the N-terminus, the 400-residue chain is Telomere repeat-binding protein 6 (400 aa).

The region spanning 173–252 (VKFGIKSLNI…DDENLGSLGF (80 aa)) is the Ubiquitin-like domain. The HTH myb-type domain occupies 310–369 (VQRRIRRPFTVSEVEALVQAVERLGTGRWRDVKSHAFNHVNHRTYVDLKDKWKTLVHTAK). Residues 338-365 (WRDVKSHAFNHVNHRTYVDLKDKWKTLV) constitute a DNA-binding region (H-T-H motif).

As to quaternary structure, homodimer. In terms of tissue distribution, expressed ubiquitously.

The protein localises to the nucleus. In terms of biological role, binds specifically to the plant telomeric double-stranded DNA sequences. At least 4 repeats of telomeric sequences are required for binding. The protein is Telomere repeat-binding protein 6 (TRP6) of Arabidopsis thaliana (Mouse-ear cress).